A 715-amino-acid chain; its full sequence is Polyribonucleotide nucleotidyltransferase (715 aa).

Mg(2+)-binding residues include aspartate 489 and aspartate 495. The KH domain occupies 556–615 (PRIETLRIPTEKIREVIGTGGKVIREICEKTGAKINIEDDGTVKVASSDGNSIKAAINWI). One can recognise an S1 motif domain in the interval 625–693 (GHIYDGTVVK…DRGKVRLSMR (69 aa)).

The protein belongs to the polyribonucleotide nucleotidyltransferase family. The cofactor is Mg(2+).

It is found in the cytoplasm. It catalyses the reaction RNA(n+1) + phosphate = RNA(n) + a ribonucleoside 5'-diphosphate. Involved in mRNA degradation. Catalyzes the phosphorolysis of single-stranded polyribonucleotides processively in the 3'- to 5'-direction. The polypeptide is Polyribonucleotide nucleotidyltransferase (Beijerinckia indica subsp. indica (strain ATCC 9039 / DSM 1715 / NCIMB 8712)).